The primary structure comprises 75 residues: Exodeoxyribonuclease 7 small subunit (75 aa).

This sequence belongs to the XseB family. Heterooligomer composed of large and small subunits.

It is found in the cytoplasm. It catalyses the reaction Exonucleolytic cleavage in either 5'- to 3'- or 3'- to 5'-direction to yield nucleoside 5'-phosphates.. Bidirectionally degrades single-stranded DNA into large acid-insoluble oligonucleotides, which are then degraded further into small acid-soluble oligonucleotides. The protein is Exodeoxyribonuclease 7 small subunit of Chlamydia felis (strain Fe/C-56) (Chlamydophila felis).